The primary structure comprises 49 residues: Disintegrin ocellatin (49 aa).

In terms of domain architecture, Disintegrin spans 1-47; that stretch reads DCESGPCCDNCKFLKEGTICKMARGDNMHHYCNGKTCDCPRNPYKGE. 4 disulfide bridges follow: Cys2–Cys11, Cys7–Cys32, Cys8–Cys37, and Cys20–Cys39. A Cell attachment site motif is present at residues 24 to 26; that stretch reads RGD.

The protein belongs to the venom metalloproteinase (M12B) family. P-II subfamily. P-IIa sub-subfamily. Monomer. Expressed by the venom gland.

The protein resides in the secreted. Inhibits ADP-induced human platelet aggregation. This Echis ocellatus (Ocellated saw-scaled viper) protein is Disintegrin ocellatin.